We begin with the raw amino-acid sequence, 113 residues long: Hydrogenase maturation factor HypA (113 aa).

Position 2 (H2) interacts with Ni(2+). Residues C73, C76, C89, and C92 each coordinate Zn(2+).

It belongs to the HypA/HybF family.

Involved in the maturation of [NiFe] hydrogenases. Required for nickel insertion into the metal center of the hydrogenase. This chain is Hydrogenase maturation factor HypA, found in Beijerinckia indica subsp. indica (strain ATCC 9039 / DSM 1715 / NCIMB 8712).